We begin with the raw amino-acid sequence, 483 residues long: NADH-quinone oxidoreductase subunit N (483 aa).

A run of 14 helical transmembrane segments spans residues 8–28 (INLA…GLLL), 45–65 (IAAG…GATQ), 78–98 (FAAF…VVSW), 106–126 (LGNG…MFMI), 131–151 (FLVL…LAAY), 166–186 (FVLG…IYGV), 206–226 (MLGI…KIAA), 241–261 (PTSV…AALF), 275–295 (WGPI…LAGL), 303–323 (LLAY…AVGN), 330–350 (VLVY…LILV), 373–393 (LALL…LAGF), 399–419 (IFMA…VLFS), and 452–472 (AIVG…GSLM).

This sequence belongs to the complex I subunit 2 family. In terms of assembly, NDH-1 is composed of 14 different subunits. Subunits NuoA, H, J, K, L, M, N constitute the membrane sector of the complex.

Its subcellular location is the cell inner membrane. It carries out the reaction a quinone + NADH + 5 H(+)(in) = a quinol + NAD(+) + 4 H(+)(out). Functionally, NDH-1 shuttles electrons from NADH, via FMN and iron-sulfur (Fe-S) centers, to quinones in the respiratory chain. The immediate electron acceptor for the enzyme in this species is believed to be ubiquinone. Couples the redox reaction to proton translocation (for every two electrons transferred, four hydrogen ions are translocated across the cytoplasmic membrane), and thus conserves the redox energy in a proton gradient. The polypeptide is NADH-quinone oxidoreductase subunit N (Magnetococcus marinus (strain ATCC BAA-1437 / JCM 17883 / MC-1)).